The following is a 698-amino-acid chain: Elongation factor G (698 aa).

The region spanning 10–285 (ASTRNIGIMA…AVVDFLPNPL (276 aa)) is the tr-type G domain. GTP-binding positions include 19 to 26 (AHIDAGKT), 83 to 87 (DTPGH), and 137 to 140 (NKMD).

The protein belongs to the TRAFAC class translation factor GTPase superfamily. Classic translation factor GTPase family. EF-G/EF-2 subfamily.

The protein resides in the cytoplasm. In terms of biological role, catalyzes the GTP-dependent ribosomal translocation step during translation elongation. During this step, the ribosome changes from the pre-translocational (PRE) to the post-translocational (POST) state as the newly formed A-site-bound peptidyl-tRNA and P-site-bound deacylated tRNA move to the P and E sites, respectively. Catalyzes the coordinated movement of the two tRNA molecules, the mRNA and conformational changes in the ribosome. In Frankia alni (strain DSM 45986 / CECT 9034 / ACN14a), this protein is Elongation factor G.